The following is a 645-amino-acid chain: Homeobox protein B-H2 (645 aa).

Disordered stretches follow at residues 1-50 (MTTM…TTAT), 86-134 (SSGG…QAAL), 149-176 (REREREREREHYRERHSPPGNNPYAHHP), 240-259 (SHLSHQQHHPHLHHPMHDER), 265-385 (MLQQ…KART), and 553-645 (GAQQ…ALEV). The segment covering 18-29 (SAPSATAHHPAA) has biased composition (low complexity). Over residues 106 to 121 (QHHHHHQQQQQHHHHQ) the composition is skewed to basic residues. The span at 122–134 (QQQQQQQHQQAAL) shows a compositional bias: low complexity. Over residues 149–165 (REREREREREHYRERHS) the composition is skewed to basic and acidic residues. Residues 244–253 (HQQHHPHLHH) are compositionally biased toward basic residues. The segment covering 275–316 (NNNNNNNNSSSASNNNNNNNNSASANSNIISGNSSSSNNNNG) has biased composition (low complexity). A compositionally biased stretch (gly residues) spans 317-328 (SGNGNMLLGGPG). The span at 329–339 (SSISGDQASTI) shows a compositional bias: polar residues. Residues 362–377 (SSANGDSSSHLSLSLS) are compositionally biased toward low complexity. The segment at residues 380-439 (QRKARTAFTDHQLQTLEKSFERQKYLSVQDRMELANKLELSDCQVKTWYQNRRTKWKRQT) is a DNA-binding region (homeobox). A compositionally biased stretch (low complexity) spans 553–574 (GAQQQQQQPPAASRSPATSQSA). Residues 583–592 (TSSSSRQRLI) are compositionally biased toward polar residues. Thr-593 carries the phosphothreonine modification. Residues 594 to 603 (PSPPLNPGSP) show a composition bias toward pro residues. Ser-595 and Ser-602 each carry phosphoserine. A compositionally biased stretch (basic and acidic residues) spans 618–632 (DEERDIERERERERE). A compositionally biased stretch (acidic residues) spans 633–645 (RDEDDEEELALEV).

The protein belongs to the Antp homeobox family. As to expression, B-H1 and B-H2 are abundant in the eye-antenna imaginal disk. Expressed in R1 and R6 cells throughout larval stage until 30 hours after puparium formation, at which time expression is seen in the anterior and posterior primary pigment cells. Coexpressed in embryonic glial cells, neurons of the CNS and PNS, most latitudinal anterior cells of the developing notum and the central circular region of the leg and antennal imaginal disk throughout larval development.

It is found in the nucleus. In terms of biological role, B-H1 and B-H2 are regulated by members of the wg signaling pathway; wg and dpp. B-H1 and B-H2 are coexpressed and functionally required in R1 and R6 receptor cells and primary pigment cells for normal eye development. Coexpression is also required for the fate determination of external sensory organs, formation of notal microchaetae, formation of presutural macrochaetae, antennal development and for distal leg morphogenesis; segmentation and specification of tarsal segments 3-5. This chain is Homeobox protein B-H2 (B-H2), found in Drosophila melanogaster (Fruit fly).